The sequence spans 346 residues: 4-hydroxy-2-oxovalerate aldolase (346 aa).

One can recognise a Pyruvate carboxyltransferase domain in the interval 8 to 260 (VTLHDMSLRD…ETGIDLYKIM (253 aa)). Substrate is bound at residue 16-17 (RD). D17 is a Mn(2+) binding site. H20 acts as the Proton acceptor in catalysis. Residues S170 and H199 each coordinate substrate. The Mn(2+) site is built by H199 and H201. Y290 serves as a coordination point for substrate.

Belongs to the 4-hydroxy-2-oxovalerate aldolase family.

The catalysed reaction is (S)-4-hydroxy-2-oxopentanoate = acetaldehyde + pyruvate. In Stutzerimonas stutzeri (Pseudomonas stutzeri), this protein is 4-hydroxy-2-oxovalerate aldolase (nahM).